The following is a 1088-amino-acid chain: Leucine-rich repeat receptor-like protein kinase PEPR2 (1088 aa).

The signal sequence occupies residues 1-26; the sequence is MRNLGLLEITLLCSLFVYFRIDSVSS. The Extracellular portion of the chain corresponds to 27 to 739; that stretch reads LNSDGLALLS…QVKLSTWKIA (713 aa). N-linked (GlcNAc...) asparagine glycans are attached at residues asparagine 55, asparagine 82, and asparagine 122. 26 LRR repeats span residues 75–99, 100–122, 123–146, 147–170, 172–194, 195–219, 221–243, 244–267, 269–291, 292–315, 316–339, 341–363, 365–387, 388–411, 412–435, 436–459, 460–485, 487–506, 507–529, 530–554, 556–577, 578–602, 603–627, 629–651, 652–676, and 678–698; these read GNVV…IGEL, KSLV…TLGN, CTSL…IFGS, LQNL…SVGG, IELV…LLGN, CSKL…LYLL, NLGE…SSNC, KKLV…IGNC, SLHS…MGML, RKVS…LGNC, SSLE…LSKL, KLQS…IWKI, SLTQ…VTQL, KHLK…LGLN, RSLE…LCHG, QKLR…IRQC, KTLE…SLSL, YVNL…LGSC, KNLL…ELGN, LQSL…LSGC, RLLY…SFRS, WKSL…LAEL, DRLS…GLLK, LRYG…LGAL, INLE…SLKS, and NQVD…LLSN. Asparagine 149, asparagine 159, asparagine 183, asparagine 194, asparagine 209, asparagine 229, asparagine 266, asparagine 279, and asparagine 314 each carry an N-linked (GlcNAc...) asparagine glycan. N-linked (GlcNAc...) asparagine glycosylation is found at asparagine 373 and asparagine 411. N-linked (GlcNAc...) asparagine glycans are attached at residues asparagine 537 and asparagine 568. 2 N-linked (GlcNAc...) asparagine glycosylation sites follow: asparagine 658 and asparagine 698. The helical transmembrane segment at 740-760 threads the bilayer; that stretch reads LIAAGSSLSVLALLFALFLVL. The Cytoplasmic portion of the chain corresponds to 761 to 1088; it reads CRCKRGTKTE…FVRSTSGSVH (328 aa). Threonine 791 bears the Phosphothreonine mark. The Protein kinase domain occupies 794–1080; sequence LDDKYIIGRG…KDLTDLESFV (287 aa). ATP is bound by residues 800-808 and lysine 822; that span reads IGRGAHGVV. A phosphotyrosine mark is found at tyrosine 868 and tyrosine 908. Aspartate 921 functions as the Proton acceptor in the catalytic mechanism. Tyrosine 962 and tyrosine 969 each carry phosphotyrosine.

It belongs to the protein kinase superfamily. Ser/Thr protein kinase family. As to quaternary structure, interacts with BAK1. Interacts with CLE14.

The protein localises to the cell membrane. It carries out the reaction L-seryl-[protein] + ATP = O-phospho-L-seryl-[protein] + ADP + H(+). The catalysed reaction is L-threonyl-[protein] + ATP = O-phospho-L-threonyl-[protein] + ADP + H(+). Its function is as follows. Acts as a receptor for PEP defense peptides. Unlike typical immune receptors, senses an endogenous elicitor that potentiates PAMP-inducible plant responses. The polypeptide is Leucine-rich repeat receptor-like protein kinase PEPR2 (PEPR2) (Arabidopsis thaliana (Mouse-ear cress)).